Here is a 273-residue protein sequence, read N- to C-terminus: Homeobox protein Nkx-2.2 (273 aa).

Disordered stretches follow at residues 1–56 and 91–131; these read MSLT…LDAV and AASA…KRKR. Over residues 20 to 38 the composition is skewed to acidic residues; the sequence is DTNDEEGSVAEGPEEESEG. Positions 128 to 187 form a DNA-binding region, homeobox; it reads KRKRRVLFSKAQTYELERRFRQQRYLSAPEREHLASLIRLTPTQVKIWFQNHRYKMKRAR.

Belongs to the NK-2 homeobox family. As to quaternary structure, interacts with OLIG2.

The protein resides in the nucleus. Transcriptional activator involved in the development of insulin-producting beta cells in the endocrine pancreas. May also be involved in specifying diencephalic neuromeric boundaries, and in controlling the expression of genes that play a role in axonal guidance. Binds to elements within the NEUROD1 promoter. This is Homeobox protein Nkx-2.2 (NKX2-2) from Mesocricetus auratus (Golden hamster).